The primary structure comprises 349 residues: Protein disulfide isomerase Creld2 (349 aa).

The signal sequence occupies residues 1-22 (MHLLLAAGFGLLLLLLPPPAAS). The CXXC signature appears at 28-31 (CQRC). 4 disulfide bridges follow: C28/C31, C137/C151, C145/C163, and C165/C174. Residues 133–175 (DCKECQGGSERPCSGNGYCSGDGSRQGDGSCQCHAGYKGPLCI) enclose the EGF-like 1 domain. N187 is a glycosylation site (N-linked (GlcNAc...) asparagine). The FU 1 repeat unit spans residues 190–237 (HSICLACDESCKTCSGPSNKDCVQCEVGWARVEDACVDVDECAAETPP). An N-linked (GlcNAc...) asparagine glycan is attached at N248. The FU 2 repeat unit spans residues 250–297 (SYICEECDSTCVGCTGKGPANCKECIAGYTKQSGQCADIDECSLEEKA). The CXXC signature appears at 260–263 (CVGC). 4 cysteine pairs are disulfide-bonded: C260/C263, C291/C305, C298/C314, and C316/C327. An EGF-like 2; calcium-binding domain is found at 287 to 328 (DIDECSLEEKACKRRNENCYNVPGSFVCVCPDGFEETEDACV).

It belongs to the CRELD family. In terms of assembly, interacts with Chrna4. Component of a complex containing at least Creld2, Manf, Matn3 and Pdia4. As to expression, broadly expressed in brain (at protein level).

Its subcellular location is the endoplasmic reticulum. It carries out the reaction Catalyzes the rearrangement of -S-S- bonds in proteins.. Functionally, protein disulfide isomerase. Might play a role in the unfolded protein response. May regulate transport of alpha4-beta2 neuronal acetylcholine receptor. The polypeptide is Protein disulfide isomerase Creld2 (Creld2) (Rattus norvegicus (Rat)).